The primary structure comprises 336 residues: Thiamine thiazole synthase (336 aa).

Substrate is bound by residues Ala-89, 110–111 (ES), Gly-118, and Cys-183. Cys-219 bears the 2,3-didehydroalanine (Cys) mark. Residues Asp-221, His-236, Met-288, and 298–300 (RMG) each bind substrate.

The protein belongs to the THI4 family. In terms of assembly, homooctamer. Fe cation serves as cofactor. In terms of processing, during the catalytic reaction, a sulfide is transferred from Cys-219 to a reaction intermediate, generating a dehydroalanine residue.

The protein resides in the cytoplasm. The protein localises to the nucleus. It carries out the reaction [ADP-thiazole synthase]-L-cysteine + glycine + NAD(+) = [ADP-thiazole synthase]-dehydroalanine + ADP-5-ethyl-4-methylthiazole-2-carboxylate + nicotinamide + 3 H2O + 2 H(+). Its function is as follows. Involved in biosynthesis of the thiamine precursor thiazole. Catalyzes the conversion of NAD and glycine to adenosine diphosphate 5-(2-hydroxyethyl)-4-methylthiazole-2-carboxylic acid (ADT), an adenylated thiazole intermediate. The reaction includes an iron-dependent sulfide transfer from a conserved cysteine residue of the protein to a thiazole intermediate. The enzyme can only undergo a single turnover, which suggests it is a suicide enzyme. May have additional roles in adaptation to various stress conditions and in DNA damage tolerance. The polypeptide is Thiamine thiazole synthase (Puccinia graminis f. sp. tritici (strain CRL 75-36-700-3 / race SCCL) (Black stem rust fungus)).